Consider the following 389-residue polypeptide: LL-diaminopimelate aminotransferase (389 aa).

2 residues coordinate substrate: Y13 and G38. Residues Y67, 101–102 (SK), Y126, N176, Y207, and 235–237 (SLS) each bind pyridoxal 5'-phosphate. Positions 102, 126, and 176 each coordinate substrate. N6-(pyridoxal phosphate)lysine is present on K238. R246 provides a ligand contact to pyridoxal 5'-phosphate. R364 is a binding site for substrate.

It belongs to the class-I pyridoxal-phosphate-dependent aminotransferase family. LL-diaminopimelate aminotransferase subfamily. Homodimer. Pyridoxal 5'-phosphate is required as a cofactor.

The catalysed reaction is (2S,6S)-2,6-diaminopimelate + 2-oxoglutarate = (S)-2,3,4,5-tetrahydrodipicolinate + L-glutamate + H2O + H(+). Its pathway is amino-acid biosynthesis; L-lysine biosynthesis via DAP pathway; LL-2,6-diaminopimelate from (S)-tetrahydrodipicolinate (aminotransferase route): step 1/1. In terms of biological role, involved in the synthesis of meso-diaminopimelate (m-DAP or DL-DAP), required for both lysine and peptidoglycan biosynthesis. Catalyzes the direct conversion of tetrahydrodipicolinate to LL-diaminopimelate. This Halothermothrix orenii (strain H 168 / OCM 544 / DSM 9562) protein is LL-diaminopimelate aminotransferase.